A 373-amino-acid polypeptide reads, in one-letter code: 8-amino-7-oxononanoate synthase (373 aa).

Residue arginine 16 coordinates substrate. 93–94 serves as a coordination point for pyridoxal 5'-phosphate; sequence GF. Position 118 (histidine 118) interacts with substrate. Residues serine 165, 190-193, and 222-225 contribute to the pyridoxal 5'-phosphate site; these read DEAH and TFSK. Lysine 225 is subject to N6-(pyridoxal phosphate)lysine. Substrate is bound at residue threonine 334.

It belongs to the class-II pyridoxal-phosphate-dependent aminotransferase family. BioF subfamily. In terms of assembly, homodimer. Pyridoxal 5'-phosphate serves as cofactor.

It catalyses the reaction 6-carboxyhexanoyl-[ACP] + L-alanine + H(+) = (8S)-8-amino-7-oxononanoate + holo-[ACP] + CO2. It participates in cofactor biosynthesis; biotin biosynthesis. Functionally, catalyzes the decarboxylative condensation of pimeloyl-[acyl-carrier protein] and L-alanine to produce 8-amino-7-oxononanoate (AON), [acyl-carrier protein], and carbon dioxide. In Helicobacter pylori (strain J99 / ATCC 700824) (Campylobacter pylori J99), this protein is 8-amino-7-oxononanoate synthase.